Here is a 438-residue protein sequence, read N- to C-terminus: Coenzyme A disulfide reductase (438 aa).

An FAD-binding site is contributed by 8-33 (GAVAGGATCASQIRRLDKESDIIIFE). Residues threonine 15, glutamine 19, arginine 22, serine 39, and asparagine 42 each contribute to the substrate site. The Nucleophile role is filled by cysteine 43. Cysteine 43 functions as the Redox-active in the catalytic mechanism. A substrate-binding site is contributed by lysine 71. 151-166 (VLVIGAGYVSLEVLEN) lines the NADP(+) pocket. An FAD-binding site is contributed by 267–277 (TNVPNIYAIGD). A substrate-binding site is contributed by histidine 299. An FAD-binding site is contributed by tyrosine 419. Lysine 427 is a substrate binding site.

This sequence belongs to the class-III pyridine nucleotide-disulfide oxidoreductase family. Homodimer. FAD serves as cofactor.

The catalysed reaction is NADP(+) + 2 CoA = CoA-disulfide + NADPH + H(+). Its function is as follows. Catalyzes specifically the NADPH-dependent reduction of coenzyme A disulfide. In Staphylococcus aureus (strain Mu3 / ATCC 700698), this protein is Coenzyme A disulfide reductase.